A 226-amino-acid chain; its full sequence is Ribonuclease 3 (226 aa).

One can recognise an RNase III domain in the interval 6-128 (IQKLQKILGY…LIGSIFLDSN (123 aa)). Glu-41 is a binding site for Mg(2+). The active site involves Asp-45. Mg(2+)-binding residues include Asn-114 and Glu-117. Glu-117 is a catalytic residue. The DRBM domain occupies 155–225 (DPKTRLQEYL…AQNALIKLGI (71 aa)).

The protein belongs to the ribonuclease III family. Homodimer. Mg(2+) is required as a cofactor.

It is found in the cytoplasm. It catalyses the reaction Endonucleolytic cleavage to 5'-phosphomonoester.. Digests double-stranded RNA. Involved in the processing of primary rRNA transcript to yield the immediate precursors to the large and small rRNAs (23S and 16S). Processes some mRNAs, and tRNAs when they are encoded in the rRNA operon. Processes pre-crRNA and tracrRNA of type II CRISPR loci if present in the organism. This Buchnera aphidicola subsp. Baizongia pistaciae (strain Bp) protein is Ribonuclease 3.